The chain runs to 287 residues: ATP phosphoribosyltransferase (287 aa).

This sequence belongs to the ATP phosphoribosyltransferase family. Long subfamily. In terms of assembly, equilibrium between an active dimeric form, an inactive hexameric form and higher aggregates. Interconversion between the various forms is largely reversible and is influenced by the natural substrates and inhibitors of the enzyme. Mg(2+) serves as cofactor.

The protein resides in the cytoplasm. The enzyme catalyses 1-(5-phospho-beta-D-ribosyl)-ATP + diphosphate = 5-phospho-alpha-D-ribose 1-diphosphate + ATP. Its pathway is amino-acid biosynthesis; L-histidine biosynthesis; L-histidine from 5-phospho-alpha-D-ribose 1-diphosphate: step 1/9. Its activity is regulated as follows. Feedback inhibited by histidine. Catalyzes the condensation of ATP and 5-phosphoribose 1-diphosphate to form N'-(5'-phosphoribosyl)-ATP (PR-ATP). Has a crucial role in the pathway because the rate of histidine biosynthesis seems to be controlled primarily by regulation of HisG enzymatic activity. The polypeptide is ATP phosphoribosyltransferase (hisG) (Mycobacterium leprae (strain TN)).